Consider the following 133-residue polypeptide: MLSPEAERVLRYLVEVEELAEEVLADKRQIVDLDTKRNQNREGLRALQKDLSLSEDVMVCFGNMFIKMPHPETKEMIEKDQDHLDKEIEKLRKQLKVKVNRLFEAQGKPELKGFNLNPLNQDELKALKVILKG.

This sequence belongs to the prefoldin subunit beta family. Component of the PAQosome complex which is responsible for the biogenesis of several protein complexes and which consists of R2TP complex members RUVBL1, RUVBL2, RPAP3 and PIH1D1, URI complex members PFDN2, PFDN6, PDRG1, UXT and URI1 as well as ASDURF, POLR2E and DNAAF10/WDR92. As to expression, predominantly expressed in normal testis and exhibits reduced but detectable expression in other organs.

It is found in the cytoplasm. May play a role in chaperone-mediated protein folding. The chain is p53 and DNA damage-regulated protein 1 (PDRG1) from Homo sapiens (Human).